Reading from the N-terminus, the 593-residue chain is Eukaryotic peptide chain release factor subunit 1 (593 aa).

Belongs to the eukaryotic release factor 1 family. As to quaternary structure, heterodimer of two subunits, one of which binds GTP.

It localises to the cytoplasm. In terms of biological role, directs the termination of nascent peptide synthesis (translation) in response to the termination codons UAA, UAG and UGA. The polypeptide is Eukaryotic peptide chain release factor subunit 1 (Caenorhabditis elegans).